Reading from the N-terminus, the 624-residue chain is DNA mismatch repair protein MutL (624 aa).

Residues glycine 360–tyrosine 396 form a disordered region. The segment covering proline 369 to alanine 385 has biased composition (basic and acidic residues).

This sequence belongs to the DNA mismatch repair MutL/HexB family.

This protein is involved in the repair of mismatches in DNA. It is required for dam-dependent methyl-directed DNA mismatch repair. May act as a 'molecular matchmaker', a protein that promotes the formation of a stable complex between two or more DNA-binding proteins in an ATP-dependent manner without itself being part of a final effector complex. The polypeptide is DNA mismatch repair protein MutL (Serratia proteamaculans (strain 568)).